A 133-amino-acid chain; its full sequence is Large ribosomal subunit protein bL17 (133 aa).

It belongs to the bacterial ribosomal protein bL17 family. As to quaternary structure, part of the 50S ribosomal subunit. Contacts protein L32.

This is Large ribosomal subunit protein bL17 from Alteromonas mediterranea (strain DSM 17117 / CIP 110805 / LMG 28347 / Deep ecotype).